Here is a 170-residue protein sequence, read N- to C-terminus: M-agglutinin (170 aa).

The first 24 residues, 1–24, serve as a signal peptide directing secretion; that stretch reads MNLKKIAIASSVFAGITMALTCHA.

In terms of biological role, this protein is a non-fimbrial hemagglutinin that is specific for blood group M. The sequence is that of M-agglutinin (bmaE) from Escherichia coli.